Reading from the N-terminus, the 387-residue chain is GTPase Obg (387 aa).

The region spanning 1-159 is the Obg domain; that stretch reads MKFVDEVEIR…RSLKLELLLL (159 aa). The OBG-type G domain occupies 160 to 333; that stretch reads ADVGLLGLPN…LTQKVMTFIE (174 aa). GTP-binding positions include 166 to 173, 191 to 195, 213 to 216, 283 to 286, and 314 to 316; these read GLPNAGKS, FTTLV, DIPG, NKLD, and SAF. Mg(2+) contacts are provided by S173 and T193. The tract at residues 361-387 is disordered; the sequence is AAHSQDDDLDDDDWDEDDYDVEVEYRQ. The segment covering 367 to 387 has biased composition (acidic residues); sequence DDLDDDDWDEDDYDVEVEYRQ.

It belongs to the TRAFAC class OBG-HflX-like GTPase superfamily. OBG GTPase family. Monomer. Mg(2+) serves as cofactor.

The protein localises to the cytoplasm. Functionally, an essential GTPase which binds GTP, GDP and possibly (p)ppGpp with moderate affinity, with high nucleotide exchange rates and a fairly low GTP hydrolysis rate. Plays a role in control of the cell cycle, stress response, ribosome biogenesis and in those bacteria that undergo differentiation, in morphogenesis control. In Colwellia psychrerythraea (strain 34H / ATCC BAA-681) (Vibrio psychroerythus), this protein is GTPase Obg.